A 228-amino-acid polypeptide reads, in one-letter code: Geranylgeranylglyceryl phosphate synthase (228 aa).

Position 13 (Lys13) interacts with sn-glycerol 1-phosphate. Mg(2+) is bound by residues Asp15 and Thr41. Sn-glycerol 1-phosphate contacts are provided by residues 159–164 (YIEYSG), Gly189, and 209–210 (GN).

It belongs to the GGGP/HepGP synthase family. Group I subfamily. Requires Mg(2+) as cofactor.

Its subcellular location is the cytoplasm. It carries out the reaction sn-glycerol 1-phosphate + (2E,6E,10E)-geranylgeranyl diphosphate = sn-3-O-(geranylgeranyl)glycerol 1-phosphate + diphosphate. The protein operates within membrane lipid metabolism; glycerophospholipid metabolism. Prenyltransferase that catalyzes the transfer of the geranylgeranyl moiety of geranylgeranyl diphosphate (GGPP) to the C3 hydroxyl of sn-glycerol-1-phosphate (G1P). This reaction is the first ether-bond-formation step in the biosynthesis of archaeal membrane lipids. This Methanospirillum hungatei JF-1 (strain ATCC 27890 / DSM 864 / NBRC 100397 / JF-1) protein is Geranylgeranylglyceryl phosphate synthase.